Consider the following 117-residue polypeptide: Large ribosomal subunit protein bL20 (117 aa).

Belongs to the bacterial ribosomal protein bL20 family.

Binds directly to 23S ribosomal RNA and is necessary for the in vitro assembly process of the 50S ribosomal subunit. It is not involved in the protein synthesizing functions of that subunit. The protein is Large ribosomal subunit protein bL20 of Symbiobacterium thermophilum (strain DSM 24528 / JCM 14929 / IAM 14863 / T).